The primary structure comprises 510 residues: NAD(P)H-quinone oxidoreductase subunit 2 A, chloroplastic (510 aa).

Transmembrane regions (helical) follow at residues 26-46 (LFDG…ILLL), 57-77 (IPWF…ALLF), 99-119 (IFQF…VEYI), 124-144 (MAIT…MFLC), 149-169 (LITI…LSGY), 183-203 (YLLM…WLYG), 227-247 (PGIS…LSPA), 295-315 (WHPL…LIAI), 323-342 (MLAY…IIVG), 354-374 (YMLF…LFGL), 395-415 (ALSL…AGFF), 418-438 (LHLF…IGLF), and 484-504 (MIVC…IIAI).

It belongs to the complex I subunit 2 family. As to quaternary structure, NDH is composed of at least 16 different subunits, 5 of which are encoded in the nucleus.

The protein localises to the plastid. It localises to the chloroplast thylakoid membrane. The catalysed reaction is a plastoquinone + NADH + (n+1) H(+)(in) = a plastoquinol + NAD(+) + n H(+)(out). The enzyme catalyses a plastoquinone + NADPH + (n+1) H(+)(in) = a plastoquinol + NADP(+) + n H(+)(out). Functionally, NDH shuttles electrons from NAD(P)H:plastoquinone, via FMN and iron-sulfur (Fe-S) centers, to quinones in the photosynthetic chain and possibly in a chloroplast respiratory chain. The immediate electron acceptor for the enzyme in this species is believed to be plastoquinone. Couples the redox reaction to proton translocation, and thus conserves the redox energy in a proton gradient. This Oenothera biennis (German evening primrose) protein is NAD(P)H-quinone oxidoreductase subunit 2 A, chloroplastic.